The following is a 450-amino-acid chain: Putative cysteine--tRNA ligase 2 (450 aa).

Residues Ile29–His39 carry the 'HIGH' region motif. The 'KMSKS' region signature appears at Lys270–Ser274. An ATP-binding site is contributed by Lys273. Residues Pro372 to Gln392 form a disordered region.

This sequence belongs to the class-I aminoacyl-tRNA synthetase family. In terms of assembly, monomer.

The protein localises to the cytoplasm. The catalysed reaction is tRNA(Cys) + L-cysteine + ATP = L-cysteinyl-tRNA(Cys) + AMP + diphosphate. In Tropheryma whipplei (strain TW08/27) (Whipple's bacillus), this protein is Putative cysteine--tRNA ligase 2 (cysS2).